The primary structure comprises 179 residues: Large ribosomal subunit protein uL5 (179 aa).

This sequence belongs to the universal ribosomal protein uL5 family. In terms of assembly, part of the 50S ribosomal subunit; part of the 5S rRNA/L5/L18/L25 subcomplex. Contacts the 5S rRNA and the P site tRNA. Forms a bridge to the 30S subunit in the 70S ribosome.

Its function is as follows. This is one of the proteins that bind and probably mediate the attachment of the 5S RNA into the large ribosomal subunit, where it forms part of the central protuberance. In the 70S ribosome it contacts protein S13 of the 30S subunit (bridge B1b), connecting the 2 subunits; this bridge is implicated in subunit movement. Contacts the P site tRNA; the 5S rRNA and some of its associated proteins might help stabilize positioning of ribosome-bound tRNAs. The sequence is that of Large ribosomal subunit protein uL5 from Shewanella putrefaciens (strain CN-32 / ATCC BAA-453).